The primary structure comprises 424 residues: Protein ImpB (424 aa).

One can recognise a UmuC domain in the interval 2 to 189 (FALADINSFY…QPVGEVWGVG (188 aa)).

Belongs to the DNA polymerase type-Y family.

Involved in UV protection and mutation. In Salmonella typhimurium, this protein is Protein ImpB (impB).